Here is a 103-residue protein sequence, read N- to C-terminus: Small ribosomal subunit protein uS10c (103 aa).

It belongs to the universal ribosomal protein uS10 family. In terms of assembly, part of the 30S ribosomal subunit.

It localises to the plastid. Its subcellular location is the chloroplast. Its function is as follows. Involved in the binding of tRNA to the ribosomes. This chain is Small ribosomal subunit protein uS10c, found in Emiliania huxleyi (Coccolithophore).